Consider the following 135-residue polypeptide: Protein PsiE homolog (135 aa).

Helical transmembrane passes span 20 to 40 (VGLI…TIHL), 54 to 74 (YMLI…ALIV), 82 to 102 (HFPL…LIIV), and 107 to 127 (PIDT…LYLA).

This sequence belongs to the PsiE family.

It is found in the cell inner membrane. This Yersinia pseudotuberculosis serotype IB (strain PB1/+) protein is Protein PsiE homolog.